Reading from the N-terminus, the 498-residue chain is MKWATWILALGLLVVRTVVAREAPRELCYGHPVHDDRRPVGPATDAQPVNPLAPANATGTDYSRGCEMRLLDPPLDVSSRSSDPVNVTVAWFFDGGHCKVPLVHREYYGCPGDAMPSVETCTGGYSYTRTRIDTLMEYALVNASLVLQPGLYDAGLYIVVLVFGDDAYLGTVSLSVEANLDYPCGMKHGLTITRPGATLPPIAPTAGDHQRWRGCFPSTDEGAWENVTAAEKGLSDDYADYYDVHIFRSESDDEVVHGDAPEAPEGEEVTEEEAELTSSDLDNIEIEVVGSPAAPAEGPATEEGRGAEEDEELTSSDLDNIEIEVVGSPRPPASSPPPPPPRPHPRGRDHDHDHGHHRADDRGPQRHHRLPPEPTFVSPSDIFVTPTGSPALLLGFLGSALASRPLHLTAGETAQHVREAQQKSRHIRSLGGLQLSVETETTNTTTTQTGLSGDIRTSIYICVALAGLVVVGIVIMCLHMAIIRARARNDGYRHVASA.

The signal sequence occupies residues 1–20; that stretch reads MKWATWILALGLLVVRTVVA. 4 N-linked (GlcNAc...) asparagine; by host glycosylation sites follow: Asn-56, Asn-86, Asn-142, and Asn-226. A run of 2 repeats spans residues 271 to 292 and 308 to 329. The tract at residues 271 to 329 is 2 X 22 AA repeats of E-E-[DE]-[AE]-E-L-T-S-S-D-L-D-N-I-E-I-E-V-V-G-S-P; sequence EEEAELTSSDLDNIEIEVVGSPAAPAEGPATEEGRGAEEDEELTSSDLDNIEIEVVGSP. The interval 290–377 is disordered; the sequence is GSPAAPAEGP…HRLPPEPTFV (88 aa). Low complexity predominate over residues 292 to 301; it reads PAAPAEGPAT. Residues 308-322 are compositionally biased toward acidic residues; sequence EEDEELTSSDLDNIE. Positions 329 to 342 are enriched in pro residues; the sequence is PRPPASSPPPPPPR. The segment covering 346-364 has biased composition (basic and acidic residues); that stretch reads RGRDHDHDHGHHRADDRGP. Residue Asn-443 is glycosylated (N-linked (GlcNAc...) asparagine; by host). A helical transmembrane segment spans residues 463–483; that stretch reads VALAGLVVVGIVIMCLHMAII.

Belongs to the alphaherpesvirinae glycoprotein G family.

The protein localises to the virion membrane. Chemokine-binding protein that inhibits neutrophils' chemotaxis. In Sus scrofa (Pig), this protein is Envelope glycoprotein G (gG).